The following is a 283-amino-acid chain: Phosphatidylglycerol--prolipoprotein diacylglyceryl transferase (283 aa).

The next 7 helical transmembrane spans lie at 21–41 (LAIR…LWLA), 60–80 (LLFA…VLFY), 95–115 (VWTG…AMLW), 124–144 (FFTI…AGRL), 176–196 (SQLY…NWFI), 203–223 (GAVS…VEYV), and 239–259 (MGQI…VWAF). Arg-143 contributes to the a 1,2-diacyl-sn-glycero-3-phospho-(1'-sn-glycerol) binding site.

It belongs to the Lgt family.

The protein resides in the cell inner membrane. The catalysed reaction is L-cysteinyl-[prolipoprotein] + a 1,2-diacyl-sn-glycero-3-phospho-(1'-sn-glycerol) = an S-1,2-diacyl-sn-glyceryl-L-cysteinyl-[prolipoprotein] + sn-glycerol 1-phosphate + H(+). It participates in protein modification; lipoprotein biosynthesis (diacylglyceryl transfer). In terms of biological role, catalyzes the transfer of the diacylglyceryl group from phosphatidylglycerol to the sulfhydryl group of the N-terminal cysteine of a prolipoprotein, the first step in the formation of mature lipoproteins. The polypeptide is Phosphatidylglycerol--prolipoprotein diacylglyceryl transferase (Aliivibrio salmonicida (strain LFI1238) (Vibrio salmonicida (strain LFI1238))).